A 357-amino-acid polypeptide reads, in one-letter code: Chorismate synthase (357 aa).

Position 48 (Arg48) interacts with NADP(+). FMN-binding positions include 125–127 (RSS), 238–239 (NA), Gly282, 297–301 (KPTSS), and Arg323.

It belongs to the chorismate synthase family. Homotetramer. FMNH2 serves as cofactor.

It catalyses the reaction 5-O-(1-carboxyvinyl)-3-phosphoshikimate = chorismate + phosphate. It participates in metabolic intermediate biosynthesis; chorismate biosynthesis; chorismate from D-erythrose 4-phosphate and phosphoenolpyruvate: step 7/7. Catalyzes the anti-1,4-elimination of the C-3 phosphate and the C-6 proR hydrogen from 5-enolpyruvylshikimate-3-phosphate (EPSP) to yield chorismate, which is the branch point compound that serves as the starting substrate for the three terminal pathways of aromatic amino acid biosynthesis. This reaction introduces a second double bond into the aromatic ring system. The protein is Chorismate synthase of Gluconacetobacter diazotrophicus (strain ATCC 49037 / DSM 5601 / CCUG 37298 / CIP 103539 / LMG 7603 / PAl5).